The following is a 342-amino-acid chain: uncharacterized protein (342 aa).

The first 18 residues, 1–18, serve as a signal peptide directing secretion; sequence MWKKLMLLLLMAIPLVSA.

This is an uncharacterized protein from Methanocaldococcus jannaschii (strain ATCC 43067 / DSM 2661 / JAL-1 / JCM 10045 / NBRC 100440) (Methanococcus jannaschii).